Reading from the N-terminus, the 55-residue chain is Large ribosomal subunit protein bL33 (55 aa).

This sequence belongs to the bacterial ribosomal protein bL33 family.

This is Large ribosomal subunit protein bL33 from Aliivibrio fischeri (strain ATCC 700601 / ES114) (Vibrio fischeri).